We begin with the raw amino-acid sequence, 100 residues long: Small ribosomal subunit protein uS14 (100 aa).

It belongs to the universal ribosomal protein uS14 family. As to quaternary structure, part of the 30S ribosomal subunit. Contacts proteins S3 and S10.

Its function is as follows. Binds 16S rRNA, required for the assembly of 30S particles and may also be responsible for determining the conformation of the 16S rRNA at the A site. This Microcystis aeruginosa (strain NIES-843 / IAM M-2473) protein is Small ribosomal subunit protein uS14.